The chain runs to 147 residues: 3-hydroxyacyl-[acyl-carrier-protein] dehydratase FabZ (147 aa).

The active site involves histidine 48.

The protein belongs to the thioester dehydratase family. FabZ subfamily.

The protein localises to the cytoplasm. The enzyme catalyses a (3R)-hydroxyacyl-[ACP] = a (2E)-enoyl-[ACP] + H2O. Its function is as follows. Involved in unsaturated fatty acids biosynthesis. Catalyzes the dehydration of short chain beta-hydroxyacyl-ACPs and long chain saturated and unsaturated beta-hydroxyacyl-ACPs. The sequence is that of 3-hydroxyacyl-[acyl-carrier-protein] dehydratase FabZ from Aliarcobacter butzleri (strain RM4018) (Arcobacter butzleri).